The chain runs to 402 residues: Major outer membrane porin (402 aa).

The signal sequence occupies residues 1–22 (MKKLLKSALLFAATGSALSLQA).

The protein belongs to the chlamydial porin (CP) (TC 1.B.2) family. Part of a disulfide cross-linked outer membrane complex (COMC) composed of the major outer membrane porin, the small cysteine-rich protein (OmcA) and the large cysteine-rich periplasmic protein (OmcB).

Its subcellular location is the cell outer membrane. In elementary bodies (EBs, the infectious stage, which is able to survive outside the host cell) provides the structural integrity of the outer envelope through disulfide cross-links with the small cysteine-rich protein and the large cysteine-rich periplasmic protein. It has been described in publications as the Sarkosyl-insoluble COMC (Chlamydia outer membrane complex), and serves as the functional equivalent of peptidoglycan. Its function is as follows. Permits diffusion of specific solutes through the outer membrane. The polypeptide is Major outer membrane porin (ompA) (Chlamydia psittaci (Chlamydophila psittaci)).